A 472-amino-acid chain; its full sequence is 3-isopropylmalate dehydratase large subunit (472 aa).

The tract at residues 289–312 is disordered; the sequence is TWGTNPAQGTGVSQVVPSPDDAKD. Over residues 290–304 the composition is skewed to polar residues; sequence WGTNPAQGTGVSQVV. Positions 347, 407, and 410 each coordinate [4Fe-4S] cluster.

It belongs to the aconitase/IPM isomerase family. LeuC type 1 subfamily. Heterodimer of LeuC and LeuD. It depends on [4Fe-4S] cluster as a cofactor.

The enzyme catalyses (2R,3S)-3-isopropylmalate = (2S)-2-isopropylmalate. Its pathway is amino-acid biosynthesis; L-leucine biosynthesis; L-leucine from 3-methyl-2-oxobutanoate: step 2/4. In terms of biological role, catalyzes the isomerization between 2-isopropylmalate and 3-isopropylmalate, via the formation of 2-isopropylmaleate. The sequence is that of 3-isopropylmalate dehydratase large subunit from Halalkalibacterium halodurans (strain ATCC BAA-125 / DSM 18197 / FERM 7344 / JCM 9153 / C-125) (Bacillus halodurans).